The chain runs to 137 residues: Peptide methionine sulfoxide reductase MsrB (137 aa).

The 123-residue stretch at 7–129 (AEELKKNLSE…NSASLRFTDG (123 aa)) folds into the MsrB domain. C46, C49, C95, and C98 together coordinate Zn(2+). Catalysis depends on C118, which acts as the Nucleophile.

It belongs to the MsrB Met sulfoxide reductase family. Zn(2+) serves as cofactor.

The catalysed reaction is L-methionyl-[protein] + [thioredoxin]-disulfide + H2O = L-methionyl-(R)-S-oxide-[protein] + [thioredoxin]-dithiol. The chain is Peptide methionine sulfoxide reductase MsrB from Escherichia coli (strain K12 / MC4100 / BW2952).